The sequence spans 999 residues: Sarcoplasmic/endoplasmic reticulum calcium ATPase 3 (999 aa).

Methionine 1 carries the post-translational modification N-acetylmethionine. The Cytoplasmic segment spans residues 1–48 (MEEAHLLSAADVLRRFSVTAEGGLTLEQVTDARERYGPNELPTEEGKS). A Phosphoserine modification is found at serine 17. Threonine 19 is modified (phosphothreonine). Residues 49-69 (LWELVVEQFEDLLVRILLLAA) traverse the membrane as a helical segment. At 70–89 (LVSFVLAWFEEGEETTTAFV) the chain is on the lumenal side. The helical transmembrane segment at 90–110 (EPLVIMLILVANAIVGVWQER) threads the bilayer. The Cytoplasmic segment spans residues 111-253 (NAESAIEALK…PERTPLQRKL (143 aa)). Residues 254 to 273 (DEFGRQLSHAISVICVAVWV) traverse the membrane as a helical segment. The Lumenal segment spans residues 274–295 (INIGHFADPAHGGSWLRGAVYY). Residues 296 to 313 (FKIAVALAVAAIPEGLPA) form a helical membrane-spanning segment. Ca(2+) contacts are provided by valine 304, alanine 305, isoleucine 307, and glutamate 309. Residues 314–757 (VITTCLALGT…EEGRAIYNNM (444 aa)) lie on the Cytoplasmic side of the membrane. The active-site 4-aspartylphosphate intermediate is the aspartate 351. Positions 351 and 353 each coordinate Mg(2+). Residue threonine 353 coordinates ATP. The interval 370–400 (AEAEAGACRLHEFTISGTTYTPEGEVRQGEQ) is interaction with phospholamban 1. Threonine 415 is subject to Phosphothreonine. ATP is bound by residues glutamate 442, arginine 489, lysine 515, arginine 560, threonine 625, glycine 626, and aspartate 627. Serine 662 carries the post-translational modification Phosphoserine. Arginine 678 and lysine 684 together coordinate ATP. Aspartate 703 contacts Mg(2+). ATP is bound at residue asparagine 706. The chain crosses the membrane as a helical span at residues 758–777 (KQFIRYLISSNVGEVVCIFL). Residues asparagine 768 and glutamate 771 each coordinate Ca(2+). Over 778 to 787 (TAILGLPEAL) the chain is Lumenal. A helical membrane pass occupies residues 788 to 808 (IPVQLLWVNLVTDGLPATALG). The interval 788 to 808 (IPVQLLWVNLVTDGLPATALG) is interaction with phospholamban 2. Ca(2+) contacts are provided by asparagine 796, threonine 799, and aspartate 800. At 809 to 828 (FNPPDLDIMEKLPRNPREAL) the chain is on the cytoplasmic side. The helical transmembrane segment at 829–851 (ISGWLFFRYLAIGVYVGLATVAA) threads the bilayer. Topologically, residues 852-897 (ATWWFLYDAEGPQVTFHQLRNFLKCSEDNPLFAGIDCEVFESRFPT) are lumenal. Residues 898–917 (TMALSVLVTIEMCNALNSVS) form a helical membrane-spanning segment. Ca(2+) is bound at residue glutamate 908. The Cytoplasmic portion of the chain corresponds to 918–930 (ENQSLLRMPPWLN). A helical transmembrane segment spans residues 931–949 (PWLLGAVVMSMALHFLILL). At 950 to 964 (VPPLPLIFQVTPLSG) the chain is on the lumenal side. The helical transmembrane segment at 965–985 (RQWGVVLQMSLPVILLDEALK) threads the bilayer. The Cytoplasmic segment spans residues 986-999 (YLSRHHVDEKKDLK).

The protein belongs to the cation transport ATPase (P-type) (TC 3.A.3) family. Type IIA subfamily. Interacts with sarcolipin (SLN). Interacts with phospholamban (PLN). Interacts with myoregulin (MRLN). Interacts with DWORF. Interacts with VMP1. Interacts with TUNAR; the interaction occurs at low levels in low glucose conditions and is increased by high glucose levels. Mg(2+) is required as a cofactor. Found in most tissues. Most abundant in large and small intestine, spleen and lung. Also detected in PC12 cells.

It localises to the endoplasmic reticulum membrane. The protein resides in the sarcoplasmic reticulum membrane. It catalyses the reaction Ca(2+)(in) + ATP + H2O = Ca(2+)(out) + ADP + phosphate + H(+). Its activity is regulated as follows. Inhibited by sarcolipin (SLN), phospholamban (PLN) and myoregulin (MRLN). Enhanced by DWORF; DWORF increases activity by displacing sarcolipin (SLN), phospholamban (PLN) and myoregulin (MRLN). In terms of biological role, this magnesium-dependent enzyme catalyzes the hydrolysis of ATP coupled with the transport of the calcium. Transports calcium ions from the cytosol into the sarcoplasmic/endoplasmic reticulum lumen. Contributes to calcium sequestration involved in muscular excitation/contraction. Its function is as follows. This magnesium-dependent enzyme catalyzes the hydrolysis of ATP coupled with the transport of calcium. Transports calcium ions from the cytosol into the sarcoplasmic/endoplasmic reticulum lumen. Contributes to calcium sequestration involved in muscular excitation/contraction. This chain is Sarcoplasmic/endoplasmic reticulum calcium ATPase 3 (Atp2a3), found in Rattus norvegicus (Rat).